The sequence spans 446 residues: Tubulin beta-1 chain (446 aa).

Residues 1–4 (MREI) carry the MREI motif motif. Residues Gln-11, Glu-69, Ser-138, Gly-142, Thr-143, Gly-144, Asn-204, and Asn-226 each contribute to the GTP site. Glu-69 contacts Mg(2+). The tract at residues 426–446 (QDATAEEEGEFEEEGEYEDGA) is disordered. Residues 429 to 446 (TAEEEGEFEEEGEYEDGA) show a composition bias toward acidic residues. Glu-438 carries the 5-glutamyl polyglutamate modification.

It belongs to the tubulin family. As to quaternary structure, dimer of alpha and beta chains. A typical microtubule is a hollow water-filled tube with an outer diameter of 25 nm and an inner diameter of 15 nM. Alpha-beta heterodimers associate head-to-tail to form protofilaments running lengthwise along the microtubule wall with the beta-tubulin subunit facing the microtubule plus end conferring a structural polarity. Microtubules usually have 13 protofilaments but different protofilament numbers can be found in some organisms and specialized cells. It depends on Mg(2+) as a cofactor. Some glutamate residues at the C-terminus are polyglycylated, resulting in polyglycine chains on the gamma-carboxyl group. Glycylation is mainly limited to tubulin incorporated into axonemes (cilia and flagella) whereas glutamylation is prevalent in neuronal cells, centrioles, axonemes, and the mitotic spindle. Both modifications can coexist on the same protein on adjacent residues, and lowering polyglycylation levels increases polyglutamylation, and reciprocally. The precise function of polyglycylation is still unclear. Post-translationally, some glutamate residues at the C-terminus are polyglutamylated, resulting in polyglutamate chains on the gamma-carboxyl group. Polyglutamylation plays a key role in microtubule severing by spastin (SPAST). SPAST preferentially recognizes and acts on microtubules decorated with short polyglutamate tails: severing activity by SPAST increases as the number of glutamates per tubulin rises from one to eight, but decreases beyond this glutamylation threshold. In terms of tissue distribution, brain.

The protein localises to the cytoplasm. It localises to the cytoskeleton. In terms of biological role, tubulin is the major constituent of microtubules, a cylinder consisting of laterally associated linear protofilaments composed of alpha- and beta-tubulin heterodimers. Microtubules grow by the addition of GTP-tubulin dimers to the microtubule end, where a stabilizing cap forms. Below the cap, tubulin dimers are in GDP-bound state, owing to GTPase activity of alpha-tubulin. The chain is Tubulin beta-1 chain (tubb1) from Notothenia neglecta (Yellowbelly rockcod).